The following is a 388-amino-acid chain: 4-hydroxy-3-methylbut-2-en-1-yl diphosphate synthase (flavodoxin) (388 aa).

Residues cysteine 281, cysteine 284, cysteine 316, and glutamate 323 each contribute to the [4Fe-4S] cluster site.

Belongs to the IspG family. Requires [4Fe-4S] cluster as cofactor.

The catalysed reaction is (2E)-4-hydroxy-3-methylbut-2-enyl diphosphate + oxidized [flavodoxin] + H2O + 2 H(+) = 2-C-methyl-D-erythritol 2,4-cyclic diphosphate + reduced [flavodoxin]. It participates in isoprenoid biosynthesis; isopentenyl diphosphate biosynthesis via DXP pathway; isopentenyl diphosphate from 1-deoxy-D-xylulose 5-phosphate: step 5/6. Its function is as follows. Converts 2C-methyl-D-erythritol 2,4-cyclodiphosphate (ME-2,4cPP) into 1-hydroxy-2-methyl-2-(E)-butenyl 4-diphosphate. This chain is 4-hydroxy-3-methylbut-2-en-1-yl diphosphate synthase (flavodoxin), found in Pseudarthrobacter chlorophenolicus (strain ATCC 700700 / DSM 12829 / CIP 107037 / JCM 12360 / KCTC 9906 / NCIMB 13794 / A6) (Arthrobacter chlorophenolicus).